A 551-amino-acid chain; its full sequence is Glucans biosynthesis protein D (551 aa).

The tat-type signal signal peptide spans 1–32; that stretch reads MDRRRFIKGSMAMAAVCGTSGIASLFSQAAFA.

This sequence belongs to the OpgD/OpgG family. Predicted to be exported by the Tat system. The position of the signal peptide cleavage has not been experimentally proven.

The protein localises to the periplasm. Its pathway is glycan metabolism; osmoregulated periplasmic glucan (OPG) biosynthesis. Its function is as follows. Probably involved in the control of the structural glucose backbone of osmoregulated periplasmic glucans (OPGs). The chain is Glucans biosynthesis protein D from Escherichia coli (strain K12 / MC4100 / BW2952).